A 673-amino-acid chain; its full sequence is Gametogenetin (673 aa).

Positions 1 to 599 (MGNVQSEPSA…TSTAGASNKG (599 aa)) are disordered. Positions 14–30 (SRKEQASDRASDSRRTP) are enriched in basic and acidic residues. Residues 70–83 (ASSSPLPLTLELPS) are compositionally biased toward low complexity. An interaction with GGNBP1 region spans residues 125–506 (RGLLEASHRG…APTPPSTLSP (382 aa)). Over residues 161–178 (PAPPPTPLEPRKQLPPAP) the composition is skewed to pro residues. Residues 192–202 (LASSATSPTES) show a composition bias toward polar residues. The span at 257–268 (SASGPLAAKASP) shows a compositional bias: low complexity. Serine 399 carries the phosphoserine modification. Over residues 413 to 424 (PRRPTPALLAPP) the composition is skewed to low complexity. Positions 438–475 (RPVPPSPQQIPPLPPPPPTPPATPPPAPPPTPQPPALP) are enriched in pro residues. The segment covering 504–531 (LSPTAAADQVPAATPATVTSQVPATATA) has biased composition (low complexity). The segment at 511 to 673 (DQVPAATPAT…HYDLQATHST (163 aa)) is interactions with ZNF403/GGNBP2 and OAZ3. The span at 542–551 (TRTRRNKGPR) shows a compositional bias: basic residues.

Isoform 1 and isoform 3 interact with FANCL. Isoform 1 interacts with GGNBP1, ZNF403/GGNBP2 and OAZ3. Isoform 2 interacts with GGNBP1. In terms of tissue distribution, testis-specific. Specifically expressed in the germ cells and not in the somatic, Sertoli, or Leydig cells. In adult testis, expression starts in stage VIII pachytene spermatocytes, increases in stage IX and X pachytene spermatocytes, and culminates in stage XI diplotene spermatocytes and the meiotic cells in stage XII. Expression decreases slightly in step 1-3 spermatids, further decreases in step 4-11 spermatids, and is no longer detectable in step 12 spermatids and beyond. Isoform 2 is mainly expressed in testis.

The protein localises to the cytoplasm. Its subcellular location is the perinuclear region. It is found in the cytoplasmic vesicle. It localises to the nucleus. The protein resides in the nucleolus. In terms of biological role, may be involved in spermatogenesis. This chain is Gametogenetin (Ggn), found in Mus musculus (Mouse).